A 155-amino-acid polypeptide reads, in one-letter code: Ribosomal RNA large subunit methyltransferase H (155 aa).

Residues L72, G103, and 122 to 127 each bind S-adenosyl-L-methionine; that span reads LSALTL.

The protein belongs to the RNA methyltransferase RlmH family. Homodimer.

It localises to the cytoplasm. It carries out the reaction pseudouridine(1915) in 23S rRNA + S-adenosyl-L-methionine = N(3)-methylpseudouridine(1915) in 23S rRNA + S-adenosyl-L-homocysteine + H(+). Specifically methylates the pseudouridine at position 1915 (m3Psi1915) in 23S rRNA. The protein is Ribosomal RNA large subunit methyltransferase H of Citrobacter koseri (strain ATCC BAA-895 / CDC 4225-83 / SGSC4696).